Reading from the N-terminus, the 110-residue chain is Nucleoid-associated protein KPN78578_04440 (110 aa).

The protein belongs to the YbaB/EbfC family. As to quaternary structure, homodimer.

The protein localises to the cytoplasm. The protein resides in the nucleoid. Binds to DNA and alters its conformation. May be involved in regulation of gene expression, nucleoid organization and DNA protection. The sequence is that of Nucleoid-associated protein KPN78578_04440 from Klebsiella pneumoniae subsp. pneumoniae (strain ATCC 700721 / MGH 78578).